Reading from the N-terminus, the 739-residue chain is Protein NPGR2 (739 aa).

Positions 32–71 are disordered; the sequence is EQMRHREEEDKKSEVGVGRDYNGSSALSTAESENAKKLDN. Residues 33 to 45 are compositionally biased toward basic and acidic residues; sequence QMRHREEEDKKSE. Residues 53–63 are compositionally biased toward polar residues; it reads NGSSALSTAES. 9 TPR repeats span residues 90–127, 162–195, 215–248, 465–498, 500–533, 536–569, 592–625, 626–659, and 697–733; these read EEARALLGRIEYQKGNIEAALRVFEGIDINGITVKMKT, FEAIFLKAKSLQRLGRFQEAAESCRVILDIVETS, TKAVELLPELWKLADSPRDAILSYRRALLNHWKL, PRVVHRLALENAEQRKLDSALAYAKEALKLGAES, LEVWLLLARVLSAQKRFSDAETIVDAALNETGKW, GKLLRLKAKLRLAKGEVKDAIKTYTQLLALLQVQ, LGTWHDLAHIYINLSQWRDAESCLSRSRLIAPYS, SVRYHIEGVLYNRRGQLEEAMEAFTTALDIDPMH, and HSAWYNLGKMFKAEGSVSSMQEAVECFQAAVTLEETM.

As to quaternary structure, interacts with calmodulin in a calcium-dependent manner. As to expression, expressed in pollen, flowers and fruits.

The sequence is that of Protein NPGR2 from Arabidopsis thaliana (Mouse-ear cress).